A 450-amino-acid chain; its full sequence is Phosphoglucosamine mutase (450 aa).

S101 acts as the Phosphoserine intermediate in catalysis. S101, D243, D245, and D247 together coordinate Mg(2+). S101 bears the Phosphoserine mark.

The protein belongs to the phosphohexose mutase family. Mg(2+) is required as a cofactor. Post-translationally, activated by phosphorylation.

It catalyses the reaction alpha-D-glucosamine 1-phosphate = D-glucosamine 6-phosphate. Its function is as follows. Catalyzes the conversion of glucosamine-6-phosphate to glucosamine-1-phosphate. The sequence is that of Phosphoglucosamine mutase from Desulfotalea psychrophila (strain LSv54 / DSM 12343).